The sequence spans 566 residues: DNA ligase B (566 aa).

The active-site N6-AMP-lysine intermediate is Lys125.

The protein belongs to the NAD-dependent DNA ligase family. LigB subfamily.

It carries out the reaction NAD(+) + (deoxyribonucleotide)n-3'-hydroxyl + 5'-phospho-(deoxyribonucleotide)m = (deoxyribonucleotide)n+m + AMP + beta-nicotinamide D-nucleotide.. Catalyzes the formation of phosphodiester linkages between 5'-phosphoryl and 3'-hydroxyl groups in double-stranded DNA using NAD as a coenzyme and as the energy source for the reaction. This Pseudomonas putida (strain ATCC 47054 / DSM 6125 / CFBP 8728 / NCIMB 11950 / KT2440) protein is DNA ligase B.